Reading from the N-terminus, the 271-residue chain is Neurexophilin-1 (271 aa).

Residues 1–21 form the signal peptide; sequence MQAACWYVLLLLQPTVYLVTC. Positions 22–97 are II; the sequence is ANLTNGGKSE…WDWLRNSTDL (76 aa). N23, N68, N93, N146, N156, and N162 each carry an N-linked (GlcNAc...) asparagine glycan. The III stretch occupies residues 98–176; that stretch reads QEPRPRAKRR…LVPPTKIVEF (79 aa). Residues 177 to 185 are IV (linker domain); the sequence is DLAQQTVID. The interval 186–271 is v (Cys-rich); sequence AKDSKSFNCR…HSDTPYFPSG (86 aa).

This sequence belongs to the neurexophilin family. In terms of processing, may be proteolytically processed at the boundary between the N-terminal non-conserved and the central conserved domain in neuron-like cells. As to expression, brain, only in a scattered subpopulation of neurons that probably represent inhibitory interneurons.

The protein resides in the secreted. May be signaling molecules that resemble neuropeptides. Ligand for alpha-neurexins. In Mus musculus (Mouse), this protein is Neurexophilin-1 (Nxph1).